The following is a 689-amino-acid chain: DNA ligase (689 aa).

NAD(+) contacts are provided by residues 40-44, 89-90, and Glu122; these read DQEYD and SL. The active-site N6-AMP-lysine intermediate is Lys124. Positions 145, 182, 300, and 325 each coordinate NAD(+). Zn(2+)-binding residues include Cys419, Cys422, Cys437, and Cys442. Residues 600 to 689 enclose the BRCT domain; that stretch reads QADGVLTGAT…SADASADASA (90 aa).

Belongs to the NAD-dependent DNA ligase family. LigA subfamily. Mg(2+) is required as a cofactor. Mn(2+) serves as cofactor.

The enzyme catalyses NAD(+) + (deoxyribonucleotide)n-3'-hydroxyl + 5'-phospho-(deoxyribonucleotide)m = (deoxyribonucleotide)n+m + AMP + beta-nicotinamide D-nucleotide.. In terms of biological role, DNA ligase that catalyzes the formation of phosphodiester linkages between 5'-phosphoryl and 3'-hydroxyl groups in double-stranded DNA using NAD as a coenzyme and as the energy source for the reaction. It is essential for DNA replication and repair of damaged DNA. The chain is DNA ligase from Gemmatimonas aurantiaca (strain DSM 14586 / JCM 11422 / NBRC 100505 / T-27).